The chain runs to 438 residues: MFKFAALLALASLVPGFVQAQSPVWGQCGGNGWTGPTTCASGSTCVKQNDFYSQCLPNNQAPPSTTTQPGTTPPATTTSGGTGPTSGAGNPYTGKTVWLSPFYADEVAQAAADISNPSLATKAASVAKIPTFVWFDTVAKVPDLGGYLADARSKNQLVQIVVYDLPDRDCAALASNGEFSLANDGLNKYKNYVDQIAAQIKQFPDVSVVAVIEPDSLANLVTNLNVQKCANAQSAYKEGVIYAVQKLNAVGVTMYIDAGHAGWLGWPANLSPAAQLFAQIYRDAGSPRNLRGIATNVANFNALRASSPDPITQGNSNYDEIHYIEALAPMLSNAGFPAHFIVDQGRSGVQNIRDQWGDWCNVKGAGFGQRPTTNTGSSLIDAIVWVKPGGECDGTSDNSSPRFDSHCSLSDAHQPAPEAGTWFQAYFETLVANANPAL.

The N-terminal stretch at 1 to 20 is a signal peptide; the sequence is MFKFAALLALASLVPGFVQA. Residues 21–59 form the CBM1 domain; sequence QSPVWGQCGGNGWTGPTTCASGSTCVKQNDFYSQCLPNN. Cystine bridges form between Cys-28/Cys-45 and Cys-39/Cys-55. The disordered stretch occupies residues 57–90; the sequence is PNNQAPPSTTTQPGTTPPATTTSGGTGPTSGAGN. The segment at 60–87 is linker; the sequence is QAPPSTTTQPGTTPPATTTSGGTGPTSG. Residues 61 to 79 are compositionally biased toward low complexity; the sequence is APPSTTTQPGTTPPATTTS. Positions 88–438 are catalytic; the sequence is AGNPYTGKTV…TLVANANPAL (351 aa). Intrachain disulfides connect Cys-170–Cys-229 and Cys-360–Cys-407. The Proton donor role is filled by Asp-215. Asp-393 acts as the Nucleophile in catalysis.

The protein belongs to the glycosyl hydrolase 6 (cellulase B) family.

It catalyses the reaction Hydrolysis of (1-&gt;4)-beta-D-glucosidic linkages in cellulose and cellotetraose, releasing cellobiose from the non-reducing ends of the chains.. Shows enzymatic activity towards crystalline cellulose. At long reaction times. It is also able to degrade carboxymethyl cellulose and barley B-glucan. This chain is Exoglucanase 3 (cel3), found in Agaricus bisporus (White button mushroom).